The chain runs to 152 residues: SsrA-binding protein (152 aa).

It belongs to the SmpB family.

The protein localises to the cytoplasm. Required for rescue of stalled ribosomes mediated by trans-translation. Binds to transfer-messenger RNA (tmRNA), required for stable association of tmRNA with ribosomes. tmRNA and SmpB together mimic tRNA shape, replacing the anticodon stem-loop with SmpB. tmRNA is encoded by the ssrA gene; the 2 termini fold to resemble tRNA(Ala) and it encodes a 'tag peptide', a short internal open reading frame. During trans-translation Ala-aminoacylated tmRNA acts like a tRNA, entering the A-site of stalled ribosomes, displacing the stalled mRNA. The ribosome then switches to translate the ORF on the tmRNA; the nascent peptide is terminated with the 'tag peptide' encoded by the tmRNA and targeted for degradation. The ribosome is freed to recommence translation, which seems to be the essential function of trans-translation. This chain is SsrA-binding protein, found in Helicobacter pylori (strain J99 / ATCC 700824) (Campylobacter pylori J99).